A 356-amino-acid chain; its full sequence is Gluconolactonase (356 aa).

The tat-type signal signal peptide spans 1-35 (MTTGRMSRRECLSAAVMVPIAAMTATATITGSAQA).

In terms of assembly, homodimer. In terms of processing, predicted to be exported by the Tat system. The position of the signal peptide cleavage has been experimentally proven.

The protein localises to the periplasm. The catalysed reaction is D-glucono-1,5-lactone + H2O = D-gluconate + H(+). Its pathway is carbohydrate acid metabolism; D-gluconate biosynthesis; D-gluconate from D-glucono-1,5-lactone: step 1/1. In terms of biological role, hydrolyzes the gluconolactone formed by glucose-fructose oxidoreductase, and that formed in aerobic conditions by the glucose dehydrogenase present. The chain is Gluconolactonase (gnl) from Zymomonas mobilis subsp. mobilis (strain ATCC 31821 / ZM4 / CP4).